Reading from the N-terminus, the 760-residue chain is BMP/retinoic acid-inducible neural-specific protein 1 (760 aa).

The signal sequence occupies residues 1–16; sequence MNWRFVELLYFLFVWG. The region spanning 68–251 is the MACPF domain; that stretch reads RYKIYREFAR…FVQSALSYIM (184 aa). N-linked (GlcNAc...) asparagine glycans are attached at residues N156, N433, N443, N553, N599, N630, and N676.

The protein belongs to the BRINP family. Expressed in brain. Expressed in GABAergic neurons of the pre-frontal cortex. Weakly expressed in embryonic stem (ES) cells and in ES-derived neural stem cells (NSCs).

Its subcellular location is the cytoplasm. In terms of biological role, plays a role in neurogenesis, brain development, and the functioning of GABAergic neurons. May suppress cell cycle progression in postmitotic neurons by inhibiting G1/S transition. The chain is BMP/retinoic acid-inducible neural-specific protein 1 (Brinp1) from Mus musculus (Mouse).